Reading from the N-terminus, the 149-residue chain is Calmodulin (149 aa).

EF-hand domains lie at 8–43, 44–79, 81–116, and 117–149; these read EQIS…LGQN, PTEA…KMQD, DSEE…LGEK, and LTDE…MMSK. Ca(2+) contacts are provided by Asp21, Asp23, Asp25, Thr27, Glu32, Asp57, Asp59, Ser61, Thr63, Glu68, Asp94, Asp96, Asn98, and Glu105. Lys116 bears the N6,N6,N6-trimethyllysine mark. Ca(2+)-binding residues include Asp130, Asp132, Asp134, Gln136, and Glu141.

This sequence belongs to the calmodulin family.

Functionally, calmodulin mediates the control of a large number of enzymes, ion channels and other proteins by Ca(2+). Among the enzymes to be stimulated by the calmodulin-Ca(2+) complex are a number of protein kinases and phosphatases. In Trypanosoma brucei brucei, this protein is Calmodulin.